We begin with the raw amino-acid sequence, 258 residues long: MKKFNILIALLFFTSLVISPLNVKANENIDSVKEKELHKKSELSSTALNNMKHSYADKNPIIGENKSTGDQFLENTLLYKKFFTDLINFEDLLINFNSKEMAQHFKSKNVDVYPIRYSINCYGGEIDRTACTYGGVTPHEGNKLKERKKIPINLWINGVQKEVSLDKVQTDKKNVTVQELDAQARRYLQKDLKLYNNDTLGGKIQRGKIEFDSSDGSKVSYDLFDVKGDFPEKQLRIYSDNKTLSTEHLHIDIYLYEK.

Positions 1–25 are cleaved as a signal peptide; sequence MKKFNILIALLFFTSLVISPLNVKA. Residues D212, H248, H250, and D252 each coordinate Zn(2+).

The protein belongs to the staphylococcal/streptococcal toxin family. Homodimer; zinc-dependent. Interacts with MHC class II molecules composed of alpha/HLA-DRA and beta/HLA-DRB1 chains. Zn(2+) serves as cofactor.

Its subcellular location is the secreted. Staphylococcal enterotoxin that activates the host immune system by binding as unprocessed molecules to major histocompatibility (MHC) complex class II and T-cell receptor (TCR) molecules. In turn, this ternary complex activates a large number of T-lymphocytes initiating a systemic release of pro-inflammatory cytokines. In addition, induces B-cell proliferation and differentiation in the presence of T-cells. Causes also the intoxication staphylococcal food poisoning syndrome. The chain is Enterotoxin type D (entD) from Staphylococcus aureus.